We begin with the raw amino-acid sequence, 1909 residues long: Nck-associated protein 5 (1909 aa).

Residues E71–S253 are a coiled coil. Disordered stretches follow at residues S351–W370, E736–P819, P855–S997, S1026–S1469, K1486–W1509, G1541–Q1592, F1725–P1750, and S1763–D1885. Residues E736–V748 show a composition bias toward basic and acidic residues. Composition is skewed to polar residues over residues R753–S789, A950–A965, V981–E990, and P1066–V1084. 2 stretches are compositionally biased toward low complexity: residues S1110–P1131 and A1178–K1187. Over residues D1241–S1250 the composition is skewed to basic and acidic residues. The span at Q1300 to K1325 shows a compositional bias: polar residues. Over residues G1339–S1366 the composition is skewed to low complexity. Residues P1428–E1446 show a composition bias toward polar residues. A compositionally biased stretch (low complexity) spans A1454–A1466. 2 stretches are compositionally biased toward basic and acidic residues: residues L1547 to L1560 and E1567 to D1576. Residues Y1869–D1878 show a composition bias toward polar residues.

Interacts with the SH3-containing region of the adapter protein NCK. Expressed in fetal and adult brain, leukocytes and fetal fibroblasts.

This chain is Nck-associated protein 5 (NCKAP5), found in Homo sapiens (Human).